A 251-amino-acid polypeptide reads, in one-letter code: Aspartate/glutamate leucyltransferase (251 aa).

The protein belongs to the R-transferase family. Bpt subfamily.

The protein localises to the cytoplasm. The catalysed reaction is N-terminal L-glutamyl-[protein] + L-leucyl-tRNA(Leu) = N-terminal L-leucyl-L-glutamyl-[protein] + tRNA(Leu) + H(+). It carries out the reaction N-terminal L-aspartyl-[protein] + L-leucyl-tRNA(Leu) = N-terminal L-leucyl-L-aspartyl-[protein] + tRNA(Leu) + H(+). In terms of biological role, functions in the N-end rule pathway of protein degradation where it conjugates Leu from its aminoacyl-tRNA to the N-termini of proteins containing an N-terminal aspartate or glutamate. This chain is Aspartate/glutamate leucyltransferase, found in Nitrosospira multiformis (strain ATCC 25196 / NCIMB 11849 / C 71).